We begin with the raw amino-acid sequence, 39 residues long: MALDKTYPIFTVRWLAVHGLAVPTVFFLGSISAMQFIQR.

Residues 14-30 (WLAVHGLAVPTVFFLGS) traverse the membrane as a helical segment. His-18 contacts heme.

It belongs to the PsbE/PsbF family. As to quaternary structure, heterodimer of an alpha subunit and a beta subunit. PSII is composed of 1 copy each of membrane proteins PsbA, PsbB, PsbC, PsbD, PsbE, PsbF, PsbH, PsbI, PsbJ, PsbK, PsbL, PsbM, PsbT, PsbX, PsbY, PsbZ, Psb30/Ycf12, at least 3 peripheral proteins of the oxygen-evolving complex and a large number of cofactors. It forms dimeric complexes. The cofactor is heme b.

The protein localises to the plastid. The protein resides in the chloroplast thylakoid membrane. In terms of biological role, this b-type cytochrome is tightly associated with the reaction center of photosystem II (PSII). PSII is a light-driven water:plastoquinone oxidoreductase that uses light energy to abstract electrons from H(2)O, generating O(2) and a proton gradient subsequently used for ATP formation. It consists of a core antenna complex that captures photons, and an electron transfer chain that converts photonic excitation into a charge separation. The sequence is that of Cytochrome b559 subunit beta from Adiantum capillus-veneris (Maidenhair fern).